The sequence spans 275 residues: MRVALKIAYIGSNFHGSQVQLNDPTVEGELFKVLKELGIMEDPRTANFISSGRTDSGVHAMGQVVAFDTDAPNLAMPRVINSKLPGTIWAWAHAIVPENFDPRRHALSRSYRYILYGEQFDISKIRSASKLLLGSHDFSNFSTSRGSKKTVRIVKRIDIRVSGNLTRIDVEANSFLWNMVRKIVAALMMVGSGVRDEEWLGHMLDPESYEEGLEPAHGYGLVLMDVNYPIPLEWVEDGYAIRRARERVHDHLVRYRVMADILSHLFPSESSDELL.

Aspartate 55 (nucleophile) is an active-site residue. Tyrosine 111 is a binding site for substrate.

Belongs to the tRNA pseudouridine synthase TruA family.

It catalyses the reaction uridine(38/39/40) in tRNA = pseudouridine(38/39/40) in tRNA. Functionally, formation of pseudouridine at positions 38, 39 and 40 in the anticodon stem and loop of transfer RNAs. This Methanococcoides burtonii (strain DSM 6242 / NBRC 107633 / OCM 468 / ACE-M) protein is tRNA pseudouridine synthase A.